A 165-amino-acid polypeptide reads, in one-letter code: K(+)/H(+) antiporter subunit KhtT (165 aa).

Positions 76–161 (LESIEMAFSD…LKKLIHDFLS (86 aa)) constitute an RCK C-terminal domain.

In terms of assembly, the transporter is composed of the integral membrane protein KhtU and the regulatory protein KhtT.

Its subcellular location is the cell membrane. Binds cyclic di-AMP (c-di-AMP), which may regulate the activity. In terms of biological role, required for activity of the potassium/proton antiporter KhtU. Involved in protection of the cell from methylglyoxal, a toxic by-product of glycolysis. This is K(+)/H(+) antiporter subunit KhtT from Bacillus subtilis (strain 168).